Consider the following 346-residue polypeptide: Leucine zipper protein 2 (346 aa).

The first 17 residues, 1–17 (MKFIGAVYLLFLLPALS), serve as a signal peptide directing secretion. N-linked (GlcNAc...) asparagine glycans are attached at residues Asn19 and Asn131. Residues 41 to 209 (RHLSKTSKEL…QLKALKDTVH (169 aa)) are a coiled coil. The segment at 162-190 (LRYGKKDLIFKGQQLMDLENKLKVAKDEL) is leucine-zipper. Residues Asn241 and Asn296 are each glycosylated (N-linked (GlcNAc...) asparagine). Residues 271–346 (SAVMRRESTG…LKKTQSDKHN (76 aa)) are disordered. Residues 293–324 (CSHNQTESSSVMKKTFGHSQSKTPEQNGQGQA) show a composition bias toward polar residues. Residues 326–346 (TAEESVKTDGELKKTQSDKHN) are compositionally biased toward basic and acidic residues.

It is found in the secreted. This chain is Leucine zipper protein 2 (luzp2), found in Danio rerio (Zebrafish).